The primary structure comprises 1022 residues: Histone-lysine N-methyltransferase TRX1 (1022 aa).

Positions 31–151 (SSAPCPLPKK…QRQGVHKEAA (121 aa)) are disordered. A compositionally biased stretch (pro residues) spans 65–78 (EGPPPSPATAPPML). Residues 127–139 (GGAERRGYFSEPK) show a composition bias toward basic and acidic residues. A PWWP domain is found at 264-327 (PGDLVWAKLT…LKQAVPFLNG (64 aa)). A compositionally biased stretch (basic and acidic residues) spans 367–393 (SMEKGSSDANSNKDVHSCDNLSEDKTA). Residues 367 to 399 (SMEKGSSDANSNKDVHSCDNLSEDKTAESGGDY) are disordered. The region spanning 402-461 (MTPIELGNLRVSKLGRIVTDSDYFHNKKHIWPEGYTAFRKFRSVKDPHVVILYKMEVLRN) is the FYR N-terminal domain. The FYR C-terminal domain occupies 465-548 (KARPLFRVTS…SCLKYFENAG (84 aa)). Residues 553–609 (GYRAVHVNWKDLDYCSVCDMDEEYEDNLFLQCDKCRMMVHARCYGELEPLNGVLWLC) form a Phorbol-ester/DAG-type zinc finger. 2 consecutive PHD-type zinc fingers follow at residues 564–615 (LDYC…CRPE) and 677–744 (LLCS…KKHR). Residues 620-744 (SPRCCLCPVT…RLLSYCKKHR (125 aa)) form an extended PHD domain (ePHD) region. In terms of domain architecture, SET spans 861-979 (RRLAFGKSRI…PWEELTYDYR (119 aa)). Cysteine 943 lines the Zn(2+) pocket. Tyrosine 978 is an S-adenosyl-L-methionine binding site. Residues 985–1001 (QRLPCYCGFPKCRGVVN) form the Post-SET domain. Zn(2+)-binding residues include cysteine 989, cysteine 991, and cysteine 996.

Belongs to the class V-like SAM-binding methyltransferase superfamily. Histone-lysine methyltransferase family. TRX/MLL subfamily. Interacts with EHD3. As to expression, expressed in leaf blades and panicles.

Its subcellular location is the nucleus. The enzyme catalyses L-lysyl(4)-[histone H3] + S-adenosyl-L-methionine = N(6)-methyl-L-lysyl(4)-[histone H3] + S-adenosyl-L-homocysteine + H(+). In terms of biological role, possesses histone H3 methyltransferase activity in vitro. Methylates 'Lys-4' of histone H3. H3 'Lys-4' methylation represents a specific tag for epigenetic transcriptional activation. Functions as a receptor for the lipid messenger phosphatidylinositol 5-phosphate (PI5P), which negatively regulates its transcriptional activation activity. Involved in the regulation of flowering time and floral induction under long day (LD) conditions. Acts as an activator of flowering under LD conditions. May function through binding to EHD3, a repressor of GHD7. This chain is Histone-lysine N-methyltransferase TRX1, found in Oryza sativa subsp. japonica (Rice).